A 692-amino-acid polypeptide reads, in one-letter code: Elongation factor G (692 aa).

The tr-type G domain occupies 8-283; the sequence is NRIRNIGIAA…AVIDYLPAPT (276 aa). GTP is bound by residues 17–24, 81–85, and 135–138; these read AHIDAGKT, DTPGH, and NKMD.

The protein belongs to the TRAFAC class translation factor GTPase superfamily. Classic translation factor GTPase family. EF-G/EF-2 subfamily.

It localises to the cytoplasm. In terms of biological role, catalyzes the GTP-dependent ribosomal translocation step during translation elongation. During this step, the ribosome changes from the pre-translocational (PRE) to the post-translocational (POST) state as the newly formed A-site-bound peptidyl-tRNA and P-site-bound deacylated tRNA move to the P and E sites, respectively. Catalyzes the coordinated movement of the two tRNA molecules, the mRNA and conformational changes in the ribosome. This Helicobacter pylori (strain Shi470) protein is Elongation factor G.